Here is a 291-residue protein sequence, read N- to C-terminus: Bis(5'-nucleosyl)-tetraphosphatase, symmetrical (291 aa).

This sequence belongs to the Ap4A hydrolase family.

It catalyses the reaction P(1),P(4)-bis(5'-adenosyl) tetraphosphate + H2O = 2 ADP + 2 H(+). Hydrolyzes diadenosine 5',5'''-P1,P4-tetraphosphate to yield ADP. The sequence is that of Bis(5'-nucleosyl)-tetraphosphatase, symmetrical from Pseudomonas syringae pv. syringae (strain B728a).